The sequence spans 1022 residues: Sodium/potassium-transporting ATPase subunit alpha (1022 aa).

Positions 1–5 are excised as a propeptide; that stretch reads MGKGA. A disordered region spans residues 1 to 34; sequence MGKGAASEKYQPAATSENAKNSKKSKSKTTDLDE. The Cytoplasmic portion of the chain corresponds to 6-87; sequence ASEKYQPAAT…NALTPPPTTP (82 aa). At S16 the chain carries Phosphoserine; by PKC. The segment at 82–84 is interaction with phosphoinositide-3 kinase; that stretch reads PPP. Residues 88–108 traverse the membrane as a helical segment; sequence EWIKFCRQLFGGFSILLWTGA. The Lumenal portion of the chain corresponds to 109-131; sequence ILCFLAYGIQVATVDNPANDNLY. A helical membrane pass occupies residues 132–152; the sequence is LGVVLSTVVIITGCFSYYQEA. The Cytoplasmic portion of the chain corresponds to 153–288; that stretch reads KSSKIMDSFK…VGQTPIAAEI (136 aa). Positions 215–235 are disordered; the sequence is NSSLTGESEPQSRSPEYSSEN. The helical transmembrane segment at 289-308 threads the bilayer; that stretch reads EHFIHIITGVAVFLGVSFFI. The Lumenal segment spans residues 309–320; the sequence is LSLILGYTWLEA. The helical transmembrane segment at 321 to 338 threads the bilayer; sequence VIFLIGIIVANVPEGLLA. Topologically, residues 339-771 are cytoplasmic; that stretch reads TVTVCLTLTA…EEGRLIFDNL (433 aa). D376 acts as the 4-aspartylphosphate intermediate in catalysis. 2 residues coordinate Mg(2+): D716 and D720. The chain crosses the membrane as a helical span at residues 772–791; the sequence is KKSIAYTLTSNIPEITPFLV. Over 792-801 the chain is Lumenal; it reads FIIANVPLPL. The chain crosses the membrane as a helical span at residues 802–822; sequence GTVTILCIDLGTDMVPAISLA. Over 823-842 the chain is Cytoplasmic; it reads YERAESDIMKRQPRNPKTDK. The helical transmembrane segment at 843–865 threads the bilayer; sequence LVNERLISMAYGQIGMIQALGGF. The Lumenal portion of the chain corresponds to 866–917; the sequence is FSYFVILAENGFLPIDLIGIREKWDELWTQDLEDSYGQQWTYEQRKIVEYTC. Residues 918-937 form a helical membrane-spanning segment; that stretch reads HTSFFVSIVIVQWADLIICK. The Cytoplasmic segment spans residues 938 to 950; that stretch reads TRRNSIFQQGMKN. Position 942 is a phosphoserine; by PKA (S942). The chain crosses the membrane as a helical span at residues 951-969; it reads KILIFGLFEETALAAFLSY. Over 970 to 984 the chain is Lumenal; that stretch reads TPGTDIALRMYPLKP. A helical transmembrane segment spans residues 985 to 1005; that stretch reads SWWFCAFPYSLIIFLYDEARR. At 1006-1022 the chain is on the cytoplasmic side; sequence FILRRNPGGWVEQETYY.

The protein belongs to the cation transport ATPase (P-type) (TC 3.A.3) family. Type IIC subfamily. As to quaternary structure, the sodium/potassium-transporting ATPase is composed of a catalytic alpha subunit, an auxiliary non-catalytic beta subunit and an additional regulatory subunit.

It is found in the cell membrane. It catalyses the reaction K(+)(out) + Na(+)(in) + ATP + H2O = K(+)(in) + Na(+)(out) + ADP + phosphate + H(+). In terms of biological role, this is the catalytic component of the active enzyme, which catalyzes the hydrolysis of ATP coupled with the exchange of sodium and potassium ions across the plasma membrane. This action creates the electrochemical gradient of sodium and potassium ions, providing the energy for active transport of various nutrients. This is Sodium/potassium-transporting ATPase subunit alpha from Tetronarce californica (Pacific electric ray).